A 320-amino-acid chain; its full sequence is Fructose-1,6-bisphosphatase class 1 (320 aa).

Mg(2+) contacts are provided by glutamate 105, aspartate 124, leucine 126, and aspartate 127. Substrate-binding positions include 127–130 (DGSS), tyrosine 233, and lysine 263. A Mg(2+)-binding site is contributed by glutamate 269.

The protein belongs to the FBPase class 1 family. As to quaternary structure, homotetramer. The cofactor is Mg(2+).

The protein localises to the cytoplasm. The catalysed reaction is beta-D-fructose 1,6-bisphosphate + H2O = beta-D-fructose 6-phosphate + phosphate. The protein operates within carbohydrate biosynthesis; gluconeogenesis. This chain is Fructose-1,6-bisphosphatase class 1, found in Methanocorpusculum labreanum (strain ATCC 43576 / DSM 4855 / Z).